The chain runs to 190 residues: NAD(P)H-quinone oxidoreductase subunit I (190 aa).

2 consecutive 4Fe-4S ferredoxin-type domains span residues 55 to 84 and 95 to 124; these read GRIH…VDWT and KHYS…MTEE. Residues Cys64, Cys67, Cys70, Cys74, Cys104, Cys107, Cys110, and Cys114 each coordinate [4Fe-4S] cluster. Positions 169–190 are disordered; the sequence is IEPHDLPAGSQRAGKRPEEITD.

Belongs to the complex I 23 kDa subunit family. NDH-1 is composed of at least 11 different subunits. The cofactor is [4Fe-4S] cluster.

It localises to the cellular thylakoid membrane. The catalysed reaction is a plastoquinone + NADH + (n+1) H(+)(in) = a plastoquinol + NAD(+) + n H(+)(out). The enzyme catalyses a plastoquinone + NADPH + (n+1) H(+)(in) = a plastoquinol + NADP(+) + n H(+)(out). Functionally, NDH-1 shuttles electrons from an unknown electron donor, via FMN and iron-sulfur (Fe-S) centers, to quinones in the respiratory and/or the photosynthetic chain. The immediate electron acceptor for the enzyme in this species is believed to be plastoquinone. Couples the redox reaction to proton translocation, and thus conserves the redox energy in a proton gradient. The sequence is that of NAD(P)H-quinone oxidoreductase subunit I from Microcystis aeruginosa (strain NIES-843 / IAM M-2473).